The primary structure comprises 181 residues: UPF0301 protein COXBURSA331_A2219 (181 aa).

This sequence belongs to the UPF0301 (AlgH) family.

The polypeptide is UPF0301 protein COXBURSA331_A2219 (Coxiella burnetii (strain RSA 331 / Henzerling II)).